Consider the following 309-residue polypeptide: Ornithine carbamoyltransferase (309 aa).

Residues 52–55 (STRT), glutamine 79, arginine 103, and 130–133 (HPCQ) contribute to the carbamoyl phosphate site. L-ornithine-binding positions include asparagine 161, aspartate 221, and 225–226 (SM). Carbamoyl phosphate-binding positions include 261–262 (CL) and arginine 289.

This sequence belongs to the aspartate/ornithine carbamoyltransferase superfamily. OTCase family.

The protein resides in the cytoplasm. The catalysed reaction is carbamoyl phosphate + L-ornithine = L-citrulline + phosphate + H(+). It participates in amino-acid biosynthesis; L-arginine biosynthesis; L-arginine from L-ornithine and carbamoyl phosphate: step 1/3. Its function is as follows. Reversibly catalyzes the transfer of the carbamoyl group from carbamoyl phosphate (CP) to the N(epsilon) atom of ornithine (ORN) to produce L-citrulline. The protein is Ornithine carbamoyltransferase of Methanoculleus marisnigri (strain ATCC 35101 / DSM 1498 / JR1).